The chain runs to 216 residues: Elongation factor Ts (216 aa).

An involved in Mg(2+) ion dislocation from EF-Tu region spans residues 81–84 (TDFV).

This sequence belongs to the EF-Ts family.

Its subcellular location is the cytoplasm. In terms of biological role, associates with the EF-Tu.GDP complex and induces the exchange of GDP to GTP. It remains bound to the aminoacyl-tRNA.EF-Tu.GTP complex up to the GTP hydrolysis stage on the ribosome. This Geotalea uraniireducens (strain Rf4) (Geobacter uraniireducens) protein is Elongation factor Ts.